Consider the following 236-residue polypeptide: 1-(5-phosphoribosyl)-5-[(5-phosphoribosylamino)methylideneamino] imidazole-4-carboxamide isomerase (236 aa).

The active-site Proton acceptor is Asp-8. Asp-127 functions as the Proton donor in the catalytic mechanism.

It belongs to the HisA/HisF family.

Its subcellular location is the cytoplasm. The enzyme catalyses 1-(5-phospho-beta-D-ribosyl)-5-[(5-phospho-beta-D-ribosylamino)methylideneamino]imidazole-4-carboxamide = 5-[(5-phospho-1-deoxy-D-ribulos-1-ylimino)methylamino]-1-(5-phospho-beta-D-ribosyl)imidazole-4-carboxamide. It participates in amino-acid biosynthesis; L-histidine biosynthesis; L-histidine from 5-phospho-alpha-D-ribose 1-diphosphate: step 4/9. The polypeptide is 1-(5-phosphoribosyl)-5-[(5-phosphoribosylamino)methylideneamino] imidazole-4-carboxamide isomerase (Sulfurimonas denitrificans (strain ATCC 33889 / DSM 1251) (Thiomicrospira denitrificans (strain ATCC 33889 / DSM 1251))).